The primary structure comprises 160 residues: Cytochrome c-type biogenesis protein CcmE (160 aa).

The Cytoplasmic portion of the chain corresponds to methionine 1 to arginine 7. The helical; Signal-anchor for type II membrane protein transmembrane segment at leucine 8–alanine 28 threads the bilayer. The Periplasmic portion of the chain corresponds to leucine 29 to arginine 160. Heme contacts are provided by histidine 122 and tyrosine 126. The disordered stretch occupies residues valine 140–arginine 160.

This sequence belongs to the CcmE/CycJ family.

The protein localises to the cell inner membrane. In terms of biological role, heme chaperone required for the biogenesis of c-type cytochromes. Transiently binds heme delivered by CcmC and transfers the heme to apo-cytochromes in a process facilitated by CcmF and CcmH. The polypeptide is Cytochrome c-type biogenesis protein CcmE (Beijerinckia indica subsp. indica (strain ATCC 9039 / DSM 1715 / NCIMB 8712)).